The primary structure comprises 233 residues: uncharacterized protein (233 aa).

The protein belongs to the methyltransferase superfamily.

This is an uncharacterized protein from Bacillus subtilis (strain 168).